The chain runs to 623 residues: Xaa-Pro aminopeptidase 1 (623 aa).

Arg-77 contacts a peptide. Lys-304 is subject to N6-acetyllysine. Residue His-395 participates in a peptide binding. Residues Asp-415, Asp-426, and His-489 each coordinate Mn(2+). Residues His-489, His-498, and Glu-523 each contribute to the a peptide site. 2 residues coordinate Mn(2+): Glu-523 and Glu-537.

The protein belongs to the peptidase M24B family. As to quaternary structure, homodimer. It depends on Mn(2+) as a cofactor.

The protein localises to the cytoplasm. It localises to the cytosol. The enzyme catalyses Release of any N-terminal amino acid, including proline, that is linked to proline, even from a dipeptide or tripeptide.. Functionally, metalloaminopeptidase that catalyzes the removal of a penultimate prolyl residue from the N-termini of peptides, such as Arg-Pro-Pro. Contributes to the degradation of bradykinin. This Mus musculus (Mouse) protein is Xaa-Pro aminopeptidase 1.